The chain runs to 204 residues: Large ribosomal subunit protein bL25 (204 aa).

This sequence belongs to the bacterial ribosomal protein bL25 family. CTC subfamily. Part of the 50S ribosomal subunit; part of the 5S rRNA/L5/L18/L25 subcomplex. Contacts the 5S rRNA. Binds to the 5S rRNA independently of L5 and L18.

This is one of the proteins that binds to the 5S RNA in the ribosome where it forms part of the central protuberance. The protein is Large ribosomal subunit protein bL25 of Pseudoalteromonas translucida (strain TAC 125).